Reading from the N-terminus, the 374-residue chain is Chaperone protein DnaJ (374 aa).

Residues 5–70 (DYYEVLGISR…SKRAAYDQFG (66 aa)) enclose the J domain. Residues 129–207 (GKTVKINIPG…CHGQGRVRQE (79 aa)) form a CR-type zinc finger. Residues Cys142, Cys145, Cys159, Cys162, Cys181, Cys184, Cys195, and Cys198 each coordinate Zn(2+). CXXCXGXG motif repeat units follow at residues 142–149 (CEACDGSG), 159–166 (CGTCQGMG), 181–188 (CPTCRGSG), and 195–202 (CKSCHGQG). The tract at residues 216-238 (PGVDTGDRIRLSGEGEMGVDGGP) is disordered.

It belongs to the DnaJ family. As to quaternary structure, homodimer. Zn(2+) serves as cofactor.

The protein resides in the cytoplasm. Functionally, participates actively in the response to hyperosmotic and heat shock by preventing the aggregation of stress-denatured proteins and by disaggregating proteins, also in an autonomous, DnaK-independent fashion. Unfolded proteins bind initially to DnaJ; upon interaction with the DnaJ-bound protein, DnaK hydrolyzes its bound ATP, resulting in the formation of a stable complex. GrpE releases ADP from DnaK; ATP binding to DnaK triggers the release of the substrate protein, thus completing the reaction cycle. Several rounds of ATP-dependent interactions between DnaJ, DnaK and GrpE are required for fully efficient folding. Also involved, together with DnaK and GrpE, in the DNA replication of plasmids through activation of initiation proteins. In Marinobacter nauticus (strain ATCC 700491 / DSM 11845 / VT8) (Marinobacter aquaeolei), this protein is Chaperone protein DnaJ.